The following is a 163-amino-acid chain: uncharacterized protein (163 aa).

2 disordered regions span residues 1–78 and 115–163; these read MHSL…NPHS and PKWL…LPCH.

This is an uncharacterized protein from Homo sapiens (Human).